The sequence spans 84 residues: U8-theraphotoxin-Hhn1c 3 (84 aa).

Positions 1–21 (MKVALIVCLVWVMAMMELVSC) are cleaved as a signal peptide. Disulfide bonds link Cys-23-Cys-35, Cys-29-Cys-44, Cys-34-Cys-67, Cys-54-Cys-75, and Cys-69-Cys-81.

Belongs to the AVIT (prokineticin) family. Expressed by the venom gland.

It localises to the secreted. This chain is U8-theraphotoxin-Hhn1c 3, found in Cyriopagopus hainanus (Chinese bird spider).